A 204-amino-acid polypeptide reads, in one-letter code: High frequency lysogenization protein HflD homolog (204 aa).

Belongs to the HflD family.

It localises to the cytoplasm. Its subcellular location is the cell inner membrane. The polypeptide is High frequency lysogenization protein HflD homolog (Shewanella sediminis (strain HAW-EB3)).